Consider the following 300-residue polypeptide: Nucleotide-binding protein TM1040_2438 (300 aa).

24–31 (GPSGAGRT) provides a ligand contact to ATP. 71–74 (DPRN) contacts GTP.

It belongs to the RapZ-like family.

Functionally, displays ATPase and GTPase activities. The sequence is that of Nucleotide-binding protein TM1040_2438 from Ruegeria sp. (strain TM1040) (Silicibacter sp.).